A 323-amino-acid chain; its full sequence is Prostaglandin F synthase 2 (323 aa).

NADP(+)-binding positions include 20-24 (GFGTY) and Asp-50. The Proton donor role is filled by Tyr-55. His-117 is a substrate binding site. NADP(+) is bound by residues 166–167 (SN), Gln-190, 216–221 (YAALGA), and 270–280 (KSFNKKRIKEN).

It belongs to the aldo/keto reductase family. In terms of assembly, monomer.

The protein localises to the cytoplasm. The catalysed reaction is prostaglandin F2alpha + NADP(+) = prostaglandin D2 + NADPH + H(+). It participates in lipid metabolism; prostaglandin biosynthesis. Functionally, catalyzes the reduction of PGD(2) and PGH(2) to PGF(2 alpha) and a stereoisomer, respectively. It has a broad substrate specificity and also reduces other carbonyl compounds. The protein is Prostaglandin F synthase 2 of Bos taurus (Bovine).